The chain runs to 408 residues: LL-diaminopimelate aminotransferase (408 aa).

Residues tyrosine 15 and glycine 42 each contribute to the substrate site. Pyridoxal 5'-phosphate-binding positions include tyrosine 72, 108–109, tyrosine 132, asparagine 187, tyrosine 218, and 246–248; these read SK and SFS. 3 residues coordinate substrate: lysine 109, tyrosine 132, and asparagine 187. At lysine 249 the chain carries N6-(pyridoxal phosphate)lysine. Pyridoxal 5'-phosphate-binding residues include arginine 257 and asparagine 292. Substrate-binding residues include asparagine 292 and arginine 388.

The protein belongs to the class-I pyridoxal-phosphate-dependent aminotransferase family. LL-diaminopimelate aminotransferase subfamily. Homodimer. Pyridoxal 5'-phosphate serves as cofactor.

The enzyme catalyses (2S,6S)-2,6-diaminopimelate + 2-oxoglutarate = (S)-2,3,4,5-tetrahydrodipicolinate + L-glutamate + H2O + H(+). It functions in the pathway amino-acid biosynthesis; L-lysine biosynthesis via DAP pathway; LL-2,6-diaminopimelate from (S)-tetrahydrodipicolinate (aminotransferase route): step 1/1. In terms of biological role, involved in the synthesis of meso-diaminopimelate (m-DAP or DL-DAP), required for both lysine and peptidoglycan biosynthesis. Catalyzes the direct conversion of tetrahydrodipicolinate to LL-diaminopimelate. In Prochlorococcus marinus (strain MIT 9313), this protein is LL-diaminopimelate aminotransferase.